Reading from the N-terminus, the 287-residue chain is Aquaporin PIP1-1 (287 aa).

2 helical membrane passes run 57-77 (IAEFVATFLFLYISILTVMGV) and 92-114 (IAWSFGGMILALVYCTAGISGHI). Residues 115–117 (NPA) carry the NPA 1 motif. The next 3 helical transmembrane spans lie at 134–154 (VFYIIMQCLGAICGRGVVKGF), 176–196 (GDGLGAEIVGTFILVYTVFSA), and 210–230 (ILAPLPIGFAVFLVHLATMGI). The NPA 2 signature appears at 236-238 (NPA). A helical membrane pass occupies residues 258–278 (IFWVGPFIGAALAAIYHQVII).

It belongs to the MIP/aquaporin (TC 1.A.8) family. PIP (TC 1.A.8.11) subfamily. In terms of assembly, may interact with PIP1-2 to form heteromers. Highly expressed in roots, shoots and developing tassels, and at lower levels in leaves.

It localises to the cell membrane. In terms of biological role, water channel required to facilitate the transport of water across cell membrane. Active as heteromers with PIP1-2, but not as homomers. In Zea mays (Maize), this protein is Aquaporin PIP1-1 (PIP1-1).